Reading from the N-terminus, the 333-residue chain is Cytosolic Fe-S cluster assembly factor NBP35 (333 aa).

4 residues coordinate [4Fe-4S] cluster: C32, C46, C49, and C55. 85–92 contributes to the ATP binding site; sequence GKGGVGKS. 2 residues coordinate [4Fe-4S] cluster: C258 and C261.

Belongs to the Mrp/NBP35 ATP-binding proteins family. NUBP1/NBP35 subfamily. As to quaternary structure, heterotetramer of 2 NBP35 and 2 CFD1 chains. [4Fe-4S] cluster serves as cofactor.

The protein resides in the cytoplasm. It localises to the nucleus. Component of the cytosolic iron-sulfur (Fe/S) protein assembly (CIA) machinery. Required for maturation of extramitochondrial Fe-S proteins. The NBP35-CFD1 heterotetramer forms a Fe-S scaffold complex, mediating the de novo assembly of an Fe-S cluster and its transfer to target apoproteins. Required for biogenesis and export of both ribosomal subunits, which may reflect a role in assembly of the Fe/S clusters in RLI1, a protein which performs rRNA processing and ribosome export. In Eremothecium gossypii (strain ATCC 10895 / CBS 109.51 / FGSC 9923 / NRRL Y-1056) (Yeast), this protein is Cytosolic Fe-S cluster assembly factor NBP35.